The primary structure comprises 183 residues: Ribulose bisphosphate carboxylase small subunit, chloroplastic 3 (183 aa).

The N-terminal 57 residues, 1-57, are a transit peptide targeting the chloroplast; that stretch reads MASSLMSNAATTMAAATTTAQANMVAPFNGLKSVSAFPVTRKNNDITSVASNGGRVQ.

The protein belongs to the RuBisCO small chain family. Heterohexadecamer of 8 large and 8 small subunits.

It is found in the plastid. Its subcellular location is the chloroplast. Its function is as follows. RuBisCO catalyzes two reactions: the carboxylation of D-ribulose 1,5-bisphosphate, the primary event in carbon dioxide fixation, as well as the oxidative fragmentation of the pentose substrate. Both reactions occur simultaneously and in competition at the same active site. Although the small subunit is not catalytic it is essential for maximal activity. The chain is Ribulose bisphosphate carboxylase small subunit, chloroplastic 3 from Mesembryanthemum crystallinum (Common ice plant).